Reading from the N-terminus, the 105-residue chain is Unclassified hydrophobin D (105 aa).

The N-terminal stretch at 1-18 (MKFYIVLLALAAFAMAEA) is a signal peptide. 3 cysteine pairs are disulfide-bonded: Cys-35/Cys-86, Cys-42/Cys-83, and Cys-43/Cys-49.

It is found in the secreted. Its subcellular location is the cell wall. Functionally, aerial growth, conidiation, and dispersal of filamentous fungi in the environment rely upon a capability of their secreting small amphipathic proteins called hydrophobins (HPBs) with low sequence identity. Class I can self-assemble into an outermost layer of rodlet bundles on aerial cell surfaces, conferring cellular hydrophobicity that supports fungal growth, development and dispersal; whereas Class II form highly ordered films at water-air interfaces through intermolecular interactions but contribute nothing to the rodlet structure. In P.expansum, hydrophobins contribute to germination, tolerance to cold stress and mycotoxins patulin and citrinin production. The protein is Unclassified hydrophobin D of Penicillium expansum (Blue mold rot fungus).